A 243-amino-acid polypeptide reads, in one-letter code: Ubiquinone/menaquinone biosynthesis C-methyltransferase UbiE (243 aa).

Residues Thr-69, Asp-90, and 116-117 each bind S-adenosyl-L-methionine; that span reads DA.

It belongs to the class I-like SAM-binding methyltransferase superfamily. MenG/UbiE family.

The enzyme catalyses a 2-demethylmenaquinol + S-adenosyl-L-methionine = a menaquinol + S-adenosyl-L-homocysteine + H(+). It catalyses the reaction a 2-methoxy-6-(all-trans-polyprenyl)benzene-1,4-diol + S-adenosyl-L-methionine = a 5-methoxy-2-methyl-3-(all-trans-polyprenyl)benzene-1,4-diol + S-adenosyl-L-homocysteine + H(+). The protein operates within quinol/quinone metabolism; menaquinone biosynthesis; menaquinol from 1,4-dihydroxy-2-naphthoate: step 2/2. It participates in cofactor biosynthesis; ubiquinone biosynthesis. In terms of biological role, methyltransferase required for the conversion of demethylmenaquinol (DMKH2) to menaquinol (MKH2) and the conversion of 2-polyprenyl-6-methoxy-1,4-benzoquinol (DDMQH2) to 2-polyprenyl-3-methyl-6-methoxy-1,4-benzoquinol (DMQH2). The protein is Ubiquinone/menaquinone biosynthesis C-methyltransferase UbiE of Burkholderia ambifaria (strain MC40-6).